Consider the following 400-residue polypeptide: Methylamine dehydrogenase heavy chain (400 aa).

Residues 1-27 form the signal peptide; the sequence is MTTFQPGRLAGQLAATALLAATCSAFA.

The protein belongs to the aromatic amine dehydrogenase heavy chain family. In terms of assembly, tetramer of two light and two heavy chains.

The protein resides in the periplasm. The enzyme catalyses 2 oxidized [amicyanin] + methylamine + H2O = 2 reduced [amicyanin] + formaldehyde + NH4(+) + 2 H(+). Functionally, methylamine dehydrogenase carries out the oxidation of methylamine. Electrons are passed from methylamine dehydrogenase to amicyanin. The sequence is that of Methylamine dehydrogenase heavy chain (mauB) from Methylobacillus flagellatus (strain ATCC 51484 / DSM 6875 / VKM B-1610 / KT).